The sequence spans 362 residues: DNA replication and repair protein RecF (362 aa).

30–37 (GDNAQGKT) contacts ATP.

Belongs to the RecF family.

Its subcellular location is the cytoplasm. In terms of biological role, the RecF protein is involved in DNA metabolism; it is required for DNA replication and normal SOS inducibility. RecF binds preferentially to single-stranded, linear DNA. It also seems to bind ATP. The sequence is that of DNA replication and repair protein RecF from Agathobacter rectalis (strain ATCC 33656 / DSM 3377 / JCM 17463 / KCTC 5835 / VPI 0990) (Eubacterium rectale).